Here is a 78-residue protein sequence, read N- to C-terminus: Probable [Fe-S]-dependent transcriptional repressor (78 aa).

The iron-sulfur cluster site is built by C56, C61, C64, and C70.

The protein belongs to the FeoC family.

Functionally, may function as a transcriptional regulator that controls feoABC expression. This Escherichia coli O17:K52:H18 (strain UMN026 / ExPEC) protein is Probable [Fe-S]-dependent transcriptional repressor.